A 555-amino-acid polypeptide reads, in one-letter code: MKSDIEIAQEAKMLHIRDVAAKLGIEEDYLEYYGKYKAKISPALWDKIKDRKDGKLILVTAITPTPAGEGKTTTTVGLGQALAKLGKKAMIALREPSLGPSFGIKGGAAGGGYSQVVPMEDINLHFTGDIHAITAAHNLLAAMIDNHIHHGNELNIDIRTITWKRAMDMNDRALREIIVGLGGKANGYPRQDGFIITVASEIMAILCLSHDLMDLKRRLGDIIVAYDKDGSPVTARDLKADGAMAVLLKDAIKPNLVQTIENVPAFVHGGPFANIAHGCNSLIATKYGLKLADYLVTEAGFGADLGAEKFFDVKARFGGLTPNAAVVVATVRALKMHGGVKKEDLQKEDVEAVRRGIENLEKQVENVRKFGVPVVVALNKFVFDTEREIEEVRKACDRIGVDMAVAEVWEKGGEGGIELAEKVIKAADTPSNFRFLYDVNLPIKDKLHIIATEIYGADGVEYTASALKDIANIEKLGLDKMPIVVAKTQYSLSDDPKLLGRPRGFKITVRELRISRGAGFIVALTGDIMTMPGLPKHPAAENIDIDENGRIKGLF.

65-72 (TPAGEGKT) serves as a coordination point for ATP.

It belongs to the formate--tetrahydrofolate ligase family.

It carries out the reaction (6S)-5,6,7,8-tetrahydrofolate + formate + ATP = (6R)-10-formyltetrahydrofolate + ADP + phosphate. It functions in the pathway one-carbon metabolism; tetrahydrofolate interconversion. This Caldanaerobacter subterraneus subsp. tengcongensis (strain DSM 15242 / JCM 11007 / NBRC 100824 / MB4) (Thermoanaerobacter tengcongensis) protein is Formate--tetrahydrofolate ligase.